Reading from the N-terminus, the 418-residue chain is Histidine--tRNA ligase (418 aa).

It belongs to the class-II aminoacyl-tRNA synthetase family. In terms of assembly, homodimer.

Its subcellular location is the cytoplasm. The enzyme catalyses tRNA(His) + L-histidine + ATP = L-histidyl-tRNA(His) + AMP + diphosphate + H(+). The sequence is that of Histidine--tRNA ligase from Thermosipho africanus (strain TCF52B).